Reading from the N-terminus, the 395-residue chain is Neuromedin-U receptor 2 (395 aa).

Residues M1–S41 lie on the Extracellular side of the membrane. N6 and N19 each carry an N-linked (GlcNAc...) asparagine glycan. The helical transmembrane segment at V42–I62 threads the bilayer. Topologically, residues V63–Y74 are cytoplasmic. Residues Y75–I95 form a helical membrane-spanning segment. The Extracellular portion of the chain corresponds to Y96–T115. C111 and C196 form a disulfide bridge. Residues A116–V138 traverse the membrane as a helical segment. Residues A139–R157 are Cytoplasmic-facing. Residues I158–G178 traverse the membrane as a helical segment. Topologically, residues I179–T212 are extracellular. N186 is a glycosylation site (N-linked (GlcNAc...) asparagine). The chain crosses the membrane as a helical span at residues S213–L233. The Cytoplasmic segment spans residues R234 to S257. A helical membrane pass occupies residues V258–V278. Residues D279–L293 are Extracellular-facing. The helical transmembrane segment at A294 to V314 threads the bilayer. At N315 to P395 the chain is on the cytoplasmic side. The segment at F374–P395 is disordered. Residues P375 to T387 show a composition bias toward polar residues.

Belongs to the G-protein coupled receptor 1 family. In terms of tissue distribution, the highest level is detected in the uterus. In the central nervous system, high expression levels were found in the hypothalamus and moderate levels in both the medulla oblongata and spinal cord. Expressed in the hypothalamic paraventricular nucleus (PVN) and suprachiasmatic nuclei (SCN) of the hypothalamus. Expression is low in the gastrointestinal tract. In other peripheral tissues, moderate expression was observed in the lung and ovary.

Its subcellular location is the cell membrane. In terms of biological role, receptor for the neuromedin-U and neuromedin-S neuropeptides. The protein is Neuromedin-U receptor 2 (Nmur2) of Rattus norvegicus (Rat).